The chain runs to 327 residues: Annexin A8 (327 aa).

Annexin repeat units lie at residues Phe21–Tyr92, Pro93–Gln164, Gly177–Lys249, and Asn253–Gly324. The Ca(2+) site is built by Met266, Gly268, Gly270, and Asp310.

This sequence belongs to the annexin family.

Its function is as follows. This protein is an anticoagulant protein that acts as an indirect inhibitor of the thromboplastin-specific complex, which is involved in the blood coagulation cascade. This Homo sapiens (Human) protein is Annexin A8.